A 257-amino-acid chain; its full sequence is Thiazole synthase (257 aa).

Lys96 serves as the catalytic Schiff-base intermediate with DXP. 1-deoxy-D-xylulose 5-phosphate is bound by residues Gly157, 184–185, and 206–207; these read AG and NT.

Belongs to the ThiG family. In terms of assembly, homotetramer. Forms heterodimers with either ThiH or ThiS.

It is found in the cytoplasm. The catalysed reaction is [ThiS sulfur-carrier protein]-C-terminal-Gly-aminoethanethioate + 2-iminoacetate + 1-deoxy-D-xylulose 5-phosphate = [ThiS sulfur-carrier protein]-C-terminal Gly-Gly + 2-[(2R,5Z)-2-carboxy-4-methylthiazol-5(2H)-ylidene]ethyl phosphate + 2 H2O + H(+). It functions in the pathway cofactor biosynthesis; thiamine diphosphate biosynthesis. Its function is as follows. Catalyzes the rearrangement of 1-deoxy-D-xylulose 5-phosphate (DXP) to produce the thiazole phosphate moiety of thiamine. Sulfur is provided by the thiocarboxylate moiety of the carrier protein ThiS. In vitro, sulfur can be provided by H(2)S. The polypeptide is Thiazole synthase (Bartonella henselae (strain ATCC 49882 / DSM 28221 / CCUG 30454 / Houston 1) (Rochalimaea henselae)).